We begin with the raw amino-acid sequence, 233 residues long: Small ribosomal subunit protein uS2 (233 aa).

Belongs to the universal ribosomal protein uS2 family.

The polypeptide is Small ribosomal subunit protein uS2 (Clostridium botulinum (strain Alaska E43 / Type E3)).